A 166-amino-acid polypeptide reads, in one-letter code: Glycine cleavage system H protein 3, mitochondrial (166 aa).

A mitochondrion-targeting transit peptide spans 1–35; sequence MALRMWASSTANALKLSSSASKSHLLPAFSISRCF. The 83-residue stretch at 57–139 folds into the Lipoyl-binding domain; sequence VATIGITDHA…YEDGWMIKVK (83 aa). N6-lipoyllysine is present on lysine 98. Phosphoserine is present on serine 141.

This sequence belongs to the GcvH family. In terms of assembly, the glycine cleavage system is composed of four proteins: P, T, L and H. (R)-lipoate is required as a cofactor. Post-translationally, S-nitrosylated and/or glutathionylated at unknown positions in response to nitric oxide.

It localises to the mitochondrion. With respect to regulation, inhibited by harpin, S-nitrosoglutathione (GSNO), nitric oxide, N-ethylmaleimide and 5,5'-dithiobis-(2-nitrobenzoic acid). Functionally, the glycine decarboxylase (GDC) or glycine cleavage system catalyzes the degradation of glycine. The H protein shuttles the methylamine group of glycine from the P protein to the T protein. The protein is Glycine cleavage system H protein 3, mitochondrial (GDH3) of Arabidopsis thaliana (Mouse-ear cress).